The primary structure comprises 180 residues: Acireductone dioxygenase (180 aa).

Positions 97, 99, 103, and 141 each coordinate Fe(2+). Ni(2+) contacts are provided by H97, H99, E103, and H141.

This sequence belongs to the acireductone dioxygenase (ARD) family. In terms of assembly, monomer. It depends on Fe(2+) as a cofactor. The cofactor is Ni(2+).

It carries out the reaction 1,2-dihydroxy-5-(methylsulfanyl)pent-1-en-3-one + O2 = 3-(methylsulfanyl)propanoate + CO + formate + 2 H(+). The enzyme catalyses 1,2-dihydroxy-5-(methylsulfanyl)pent-1-en-3-one + O2 = 4-methylsulfanyl-2-oxobutanoate + formate + 2 H(+). Its pathway is amino-acid biosynthesis; L-methionine biosynthesis via salvage pathway; L-methionine from S-methyl-5-thio-alpha-D-ribose 1-phosphate: step 5/6. Catalyzes 2 different reactions between oxygen and the acireductone 1,2-dihydroxy-3-keto-5-methylthiopentene (DHK-MTPene) depending upon the metal bound in the active site. Fe-containing acireductone dioxygenase (Fe-ARD) produces formate and 2-keto-4-methylthiobutyrate (KMTB), the alpha-ketoacid precursor of methionine in the methionine recycle pathway. Ni-containing acireductone dioxygenase (Ni-ARD) produces methylthiopropionate, carbon monoxide and formate, and does not lie on the methionine recycle pathway. This Enterobacter sp. (strain 638) protein is Acireductone dioxygenase.